The chain runs to 262 residues: 14-3-3 protein I (262 aa).

The protein belongs to the 14-3-3 family. As to quaternary structure, homodimer. Forms a complex composed of CDPK1, PKA regulatory subunit PKAr and 14-3-3I; the complex is formed in merozoites in response to low extracellular level of K(+) and may play a role in microneme secretion. Interacts with CDPK1 (when phosphorylated) in a Ca(2+)-independent manner; the interaction does not regulate CDPK1 catalytic activity but is required for merozoite invasion of host erythrocytes. Interacts with PKA regulatory subunit PKAr (when phosphorylated) in a Ca(2+)-dependent manner. Interacts with histone H3 (when phosphorylated at 'Ser-28' or when phosphorylated at 'Ser-28' and 'Ser-32').

It localises to the cell membrane. The protein localises to the cytoplasm. Its subcellular location is the nucleus. In terms of biological role, adapter protein which binds to its partners, usually via a phosphoserine or phosphothreonine motif. Binding generally results in the modulation of the activity and/or cellular localization of the binding partner. Via its interaction with CDPK1 and PKAr, involved in merozoite microneme secretion and thus in merozoite invasion of host erythrocytes. This Plasmodium falciparum (isolate 3D7) protein is 14-3-3 protein I.